Here is a 431-residue protein sequence, read N- to C-terminus: Glucose-1-phosphate adenylyltransferase (431 aa).

Lys-39 contacts beta-D-fructose 1,6-bisphosphate. Positions 40, 46, and 52 each coordinate AMP. Position 114 (Tyr-114) interacts with alpha-D-glucose 1-phosphate. Arg-130 is a binding site for AMP. Residues Gly-179, 194 to 195 (EK), and Ser-212 each bind alpha-D-glucose 1-phosphate. The AMP site is built by Glu-370 and Arg-386. Beta-D-fructose 1,6-bisphosphate-binding positions include 419–423 (REMLR) and 429–431 (QER).

The protein belongs to the bacterial/plant glucose-1-phosphate adenylyltransferase family. In terms of assembly, homotetramer.

The enzyme catalyses alpha-D-glucose 1-phosphate + ATP + H(+) = ADP-alpha-D-glucose + diphosphate. The protein operates within glycan biosynthesis; glycogen biosynthesis. Its activity is regulated as follows. Allosterically activated by fructose-1,6-bisphosphate (F16BP) and inhibited by AMP. In terms of biological role, involved in the biosynthesis of ADP-glucose, a building block required for the elongation reactions to produce glycogen. Catalyzes the reaction between ATP and alpha-D-glucose 1-phosphate (G1P) to produce pyrophosphate and ADP-Glc. The protein is Glucose-1-phosphate adenylyltransferase of Escherichia coli O45:K1 (strain S88 / ExPEC).